The primary structure comprises 418 residues: Thyroid hormone receptor alpha-A (418 aa).

A disordered region spans residues 1–38 (MDQNLSGLDCLSEPDEKRWPDGKRKRKNSQCMGKSGMS). Residues 1–60 (MDQNLSGLDCLSEPDEKRWPDGKRKRKNSQCMGKSGMSGDSLVSLPSAGYIPSYLDKDEP) form a modulating region. 2 NR C4-type zinc fingers span residues 61–81 (CVVC…CEGC) and 99–123 (CKYD…FKKC). The segment at residues 61–135 (CVVCSDKATG…VGMAMDLVLD (75 aa)) is a DNA-binding region (nuclear receptor). Residues 171 to 415 (EEWELIRIVT…PPLFLEVFED (245 aa)) form the NR LBD domain.

This sequence belongs to the nuclear hormone receptor family. NR1 subfamily. Binds to thyroid hormone receptor element (TRE) weakly as homodimers and monomers, but binds TRE with much higher affinity as heterodimers with retinoid X receptors. Can bind DNA as a heterodimer with either rxra or rxrg.

Its subcellular location is the nucleus. Functionally, high affinity receptor for triiodothyronine (T3). In Xenopus laevis (African clawed frog), this protein is Thyroid hormone receptor alpha-A (thra-a).